A 659-amino-acid polypeptide reads, in one-letter code: Centrosomal protein of 76 kDa (659 aa).

2 positions are modified to phosphoserine: Ser75 and Ser83.

Belongs to the CEP76 family. Interacts with CCP110 and CEP97.

The protein resides in the cytoplasm. The protein localises to the cytoskeleton. It is found in the microtubule organizing center. It localises to the centrosome. Its subcellular location is the centriole. Its function is as follows. Centrosomal protein involved in regulation of centriole duplication. Required to limit centriole duplication to once per cell cycle by preventing centriole reduplication. The polypeptide is Centrosomal protein of 76 kDa (CEP76) (Homo sapiens (Human)).